The following is a 161-amino-acid chain: ATP synthase subunit b (161 aa).

Residues 10–29 (AVVQLLNFLFLLWILNKLLY) traverse the membrane as a helical segment.

The protein belongs to the ATPase B chain family. In terms of assembly, F-type ATPases have 2 components, F(1) - the catalytic core - and F(0) - the membrane proton channel. F(1) has five subunits: alpha(3), beta(3), gamma(1), delta(1), epsilon(1). F(0) has three main subunits: a(1), b(2) and c(10-14). The alpha and beta chains form an alternating ring which encloses part of the gamma chain. F(1) is attached to F(0) by a central stalk formed by the gamma and epsilon chains, while a peripheral stalk is formed by the delta and b chains.

It localises to the cell inner membrane. Its function is as follows. F(1)F(0) ATP synthase produces ATP from ADP in the presence of a proton or sodium gradient. F-type ATPases consist of two structural domains, F(1) containing the extramembraneous catalytic core and F(0) containing the membrane proton channel, linked together by a central stalk and a peripheral stalk. During catalysis, ATP synthesis in the catalytic domain of F(1) is coupled via a rotary mechanism of the central stalk subunits to proton translocation. Functionally, component of the F(0) channel, it forms part of the peripheral stalk, linking F(1) to F(0). The polypeptide is ATP synthase subunit b (Fervidobacterium nodosum (strain ATCC 35602 / DSM 5306 / Rt17-B1)).